A 59-amino-acid chain; its full sequence is MAKLQITLTRSVIGRPETQRKTVEALGLKKTNSSVVVEDNPAIRGQINKVKHLVTVEEK.

It belongs to the universal ribosomal protein uL30 family. In terms of assembly, part of the 50S ribosomal subunit.

The polypeptide is Large ribosomal subunit protein uL30 (Staphylococcus aureus (strain JH1)).